An 82-amino-acid chain; its full sequence is Escargot/snail protein homolog (82 aa).

4 consecutive C2H2-type zinc fingers follow at residues 1-5, 18-40, 44-66, and 72-82; these read HLQFH, FSCK…IRTH, CKCD…IRTH, and FSCQHCHRAFA.

It belongs to the snail C2H2-type zinc-finger protein family.

It localises to the nucleus. The sequence is that of Escargot/snail protein homolog from Bradysia coprophila (Dark-winged fungus gnat).